The chain runs to 275 residues: 2-C-methyl-D-erythritol 4-phosphate cytidylyltransferase (275 aa).

Belongs to the IspD/TarI cytidylyltransferase family. IspD subfamily.

The enzyme catalyses 2-C-methyl-D-erythritol 4-phosphate + CTP + H(+) = 4-CDP-2-C-methyl-D-erythritol + diphosphate. The protein operates within isoprenoid biosynthesis; isopentenyl diphosphate biosynthesis via DXP pathway; isopentenyl diphosphate from 1-deoxy-D-xylulose 5-phosphate: step 2/6. In terms of biological role, catalyzes the formation of 4-diphosphocytidyl-2-C-methyl-D-erythritol from CTP and 2-C-methyl-D-erythritol 4-phosphate (MEP). In Corynebacterium jeikeium (strain K411), this protein is 2-C-methyl-D-erythritol 4-phosphate cytidylyltransferase.